The chain runs to 419 residues: MTTQLEQAWELAKQRFAAVGIDVEEALRQLDRLPVSMHCWQGDDVAGFENPEGSLTGGIQATGNYPGKARSASELRADLEQALSLIPGPKRLNLHAIYLESDTPVSRDQIKPEHFKNWVEWAKANQLGLDFNPSCFSHPLSADGFTLAHADDNIRQFWIDHCKASRRVSAYFGEQLGTPSVMNIWVPDGMKDITVDRLAPRQRLLEALDEVISEKLNPAHHIDAVESKLFGIGAESYTVGSNEFYMGYATSRQTALCLDAGHFHPTEVISDKISAAMLYVPRLLLHVSRPVRWDSDHVVLLDDETQAIASEIVRHNLFDRVHIGLDFFDASINRIAAWVIGTRNMKKALLRALLEPTGQLRQLEASGDYTARLALLEEQKSLPWQAVWEMYCQRHDTPAGSQWLESVRAYEKEILSKRS.

Residues histidine 262, aspartate 294, and aspartate 296 each coordinate Mn(2+).

Belongs to the rhamnose isomerase family. In terms of assembly, homotetramer. Requires Mn(2+) as cofactor.

The protein resides in the cytoplasm. It carries out the reaction L-rhamnopyranose = L-rhamnulose. The protein operates within carbohydrate degradation; L-rhamnose degradation; glycerone phosphate from L-rhamnose: step 1/3. Functionally, catalyzes the interconversion of L-rhamnose and L-rhamnulose. The chain is L-rhamnose isomerase from Citrobacter koseri (strain ATCC BAA-895 / CDC 4225-83 / SGSC4696).